We begin with the raw amino-acid sequence, 867 residues long: Prominin-1 (867 aa).

The first 19 residues, 1–19, serve as a signal peptide directing secretion; that stretch reads MALVFSALLLLGLCGKISS. Over 20–107 the chain is Extracellular; that stretch reads EGQPAFHNTP…VLALKIALYE (88 aa). Residues 108–128 form a helical membrane-spanning segment; that stretch reads IGVLICAILGLLFIILMPLVG. Over 129–158 the chain is Cytoplasmic; that stretch reads CFFCMCRCCNKCGGEMHQRQKQNAPCRRKC. Residues 159 to 179 traverse the membrane as a helical segment; the sequence is LGLSLLVICLLMSLGIIYGFV. At 180–434 the chain is on the extracellular side; sequence ANQQTRTRIK…LPKLEEYDSY (255 aa). 3 positions are modified to N6-acetyllysine: Lys226, Lys258, and Lys265. Residues Asn273, Asn291, Asn332, Asn374, and Asn415 are each glycosylated (N-linked (GlcNAc...) asparagine). A helical membrane pass occupies residues 435–455; the sequence is WWLGGLIVCFLLTLIVTFFFL. Residues 456 to 487 lie on the Cytoplasmic side of the membrane; the sequence is GLLCGVFGYDKHATPTRRGCVSNTGGIFLMAG. The chain crosses the membrane as a helical span at residues 488–508; it reads VGFGFLFCWILMILVVLTFVV. Over 509 to 794 the chain is Extracellular; it reads GANVEKLLCE…LCGYVADPLN (286 aa). 3 N-linked (GlcNAc...) asparagine glycosylation sites follow: Asn554, Asn581, and Asn732. Residues 795-815 form a helical membrane-spanning segment; that stretch reads LFWFGIGKATVLLLPAVIIAI. Residues 816-867 are Cytoplasmic-facing; sequence KLAKYYRRMDSEDVYDDVETVPMKNLEIGSNGYHKDHLYGVHNPVMTSPSRY. Ser865 carries the phosphoserine modification.

This sequence belongs to the prominin family. As to quaternary structure, interacts with CDHR1 and with actin filaments. Interacts with NAT8 and NAT8B. Acetylation at Lys-226, Lys-258 and Lys-265 by NAT8 and NAT8B may control PROM1 protein expression and its function in cell apoptosis. In terms of tissue distribution, in the submandibular gland, expressed on the apical side of epithelial cells. In the parotid gland, expressed in the intercalated ducts. In the sublingual gland, expressed in intercalated ducts. In the extraorbital lacrimal gland, expressed in the intercalated tubules and larger intralobular ducts. Expressed in the retina. Present in urine within small membrane particles (at protein level). In the embryo, expressed on the apical side of neuroepithelial cells and of other epithelia such as lung buds, gut and ureter buds. In the adult, expressed at the apical side of the kidney tubules and of the ependymal layer of the brain. Not expressed in gut, liver, lung, pituitary, adrenal, heart or spleen. Localized to the nascent disk membranes at the base of the rod outer segment in the retina (at protein level).

It is found in the apical cell membrane. The protein localises to the cell projection. Its subcellular location is the microvillus membrane. The protein resides in the cilium. It localises to the photoreceptor outer segment. It is found in the endoplasmic reticulum. The protein localises to the endoplasmic reticulum-Golgi intermediate compartment. May play a role in cell differentiation, proliferation and apoptosis. Binds cholesterol in cholesterol-containing plasma membrane microdomains and may play a role in the organization of the apical plasma membrane in epithelial cells. During early retinal development acts as a key regulator of disk morphogenesis. Involved in regulation of MAPK and Akt signaling pathways. In neuroblastoma cells suppresses cell differentiation such as neurite outgrowth in a RET-dependent manner. The polypeptide is Prominin-1 (Prom1) (Mus musculus (Mouse)).